An 846-amino-acid chain; its full sequence is Major vault protein beta (846 aa).

A2 is subject to N-acetylalanine. MVP repeat units lie at residues 2-60, 61-115, 116-172, 173-225, 226-280, 281-332, 333-388, 389-458, and 459-521; these read ATPV…IPPR, QYCI…QPVP, LQVI…EPVR, AVII…GFIQ, ALVL…RDIK, AITL…IQNV, NVLS…RRKR, IPLD…STKV, and ITYR…FLGP.

As to quaternary structure, the vault ribonucleoprotein particle is a huge (400 A x 670 A) cage structure of 12.9 MDa. It consists of a dimer of half-vaults, with each half-vault comprising 39 identical major vault protein (MVP) chains. Dictyostelium is one of the few organisms in which the major component is actually two proteins (alpha and beta).

It localises to the cytoplasm. It is found in the nucleus. Unknown, though MVP-beta is required for normal vault structure. In Dictyostelium discoideum (Social amoeba), this protein is Major vault protein beta (mvpB).